The sequence spans 199 residues: MTLTVLTIVIIVGAYLAGSVSSAVLVCKIRGLPDPRTQGSGNPGATNVLRIGGASSAALVLFCDMLKGAAPAYLAFRLGVDPIALGVIAIAACLGHIFPIFFGFKGGKGVATAFGAMAPIGHDLALCLLASWIVLVLVTRYSSFAAICTALLAPVYTWWLDDRFTIPVAMLSTLIVIRHKDNIKRLLKGEESKVSRKKT.

5 helical membrane-spanning segments follow: residues 5–25 (VLTI…SAVL), 56–76 (SAAL…YLAF), 83–103 (IALG…IFFG), 118–138 (APIG…LVLV), and 141–161 (YSSF…WWLD).

The protein belongs to the PlsY family. In terms of assembly, probably interacts with PlsX.

It localises to the cell inner membrane. It carries out the reaction an acyl phosphate + sn-glycerol 3-phosphate = a 1-acyl-sn-glycero-3-phosphate + phosphate. Its pathway is lipid metabolism; phospholipid metabolism. Its function is as follows. Catalyzes the transfer of an acyl group from acyl-phosphate (acyl-PO(4)) to glycerol-3-phosphate (G3P) to form lysophosphatidic acid (LPA). This enzyme utilizes acyl-phosphate as fatty acyl donor, but not acyl-CoA or acyl-ACP. The protein is Glycerol-3-phosphate acyltransferase of Shewanella halifaxensis (strain HAW-EB4).